The chain runs to 188 residues: ATP synthase subunit b (188 aa).

Residues 30 to 50 (IVWSLIPFLIILIVFWKLVLP) traverse the membrane as a helical segment.

This sequence belongs to the ATPase B chain family. In terms of assembly, F-type ATPases have 2 components, F(1) - the catalytic core - and F(0) - the membrane proton channel. F(1) has five subunits: alpha(3), beta(3), gamma(1), delta(1), epsilon(1). F(0) has three main subunits: a(1), b(2) and c(10-14). The alpha and beta chains form an alternating ring which encloses part of the gamma chain. F(1) is attached to F(0) by a central stalk formed by the gamma and epsilon chains, while a peripheral stalk is formed by the delta and b chains.

It localises to the cell membrane. Its function is as follows. F(1)F(0) ATP synthase produces ATP from ADP in the presence of a proton or sodium gradient. F-type ATPases consist of two structural domains, F(1) containing the extramembraneous catalytic core and F(0) containing the membrane proton channel, linked together by a central stalk and a peripheral stalk. During catalysis, ATP synthesis in the catalytic domain of F(1) is coupled via a rotary mechanism of the central stalk subunits to proton translocation. In terms of biological role, component of the F(0) channel, it forms part of the peripheral stalk, linking F(1) to F(0). This Corynebacterium glutamicum (strain R) protein is ATP synthase subunit b.